The following is a 332-amino-acid chain: Tyrosine--tRNA ligase (332 aa).

Tyr-32, Tyr-156, Gln-160, Asp-163, and Gln-178 together coordinate L-tyrosine. The short motif at Lys-219–Ser-223 is the 'KMSKS' region element. An ATP-binding site is contributed by Lys-222.

This sequence belongs to the class-I aminoacyl-tRNA synthetase family. TyrS type 4 subfamily. In terms of assembly, homodimer.

It is found in the cytoplasm. The catalysed reaction is tRNA(Tyr) + L-tyrosine + ATP = L-tyrosyl-tRNA(Tyr) + AMP + diphosphate + H(+). Functionally, catalyzes the attachment of tyrosine to tRNA(Tyr) in a two-step reaction: tyrosine is first activated by ATP to form Tyr-AMP and then transferred to the acceptor end of tRNA(Tyr). This chain is Tyrosine--tRNA ligase, found in Thermoplasma acidophilum (strain ATCC 25905 / DSM 1728 / JCM 9062 / NBRC 15155 / AMRC-C165).